The chain runs to 278 residues: Sulfur carrier protein FdhD (278 aa).

Cysteine 121 acts as the Cysteine persulfide intermediate in catalysis. A Mo-bis(molybdopterin guanine dinucleotide)-binding site is contributed by 260-265; that stretch reads FCKPGR.

The protein belongs to the FdhD family.

Its subcellular location is the cytoplasm. Its function is as follows. Required for formate dehydrogenase (FDH) activity. Acts as a sulfur carrier protein that transfers sulfur from IscS to the molybdenum cofactor prior to its insertion into FDH. In Salmonella agona (strain SL483), this protein is Sulfur carrier protein FdhD.